A 218-amino-acid polypeptide reads, in one-letter code: 3-dehydroquinate dehydratase (218 aa).

3-dehydroquinate-binding positions include 29 to 31 and arginine 56; that span reads EFR. Histidine 116 (proton donor/acceptor) is an active-site residue. Residue lysine 142 is the Schiff-base intermediate with substrate of the active site. 3-dehydroquinate is bound by residues arginine 180, serine 200, and glutamine 204.

Belongs to the type-I 3-dehydroquinase family. In terms of assembly, homodimer.

It carries out the reaction 3-dehydroquinate = 3-dehydroshikimate + H2O. The protein operates within metabolic intermediate biosynthesis; chorismate biosynthesis; chorismate from D-erythrose 4-phosphate and phosphoenolpyruvate: step 3/7. Involved in the third step of the chorismate pathway, which leads to the biosynthesis of aromatic amino acids. Catalyzes the cis-dehydration of 3-dehydroquinate (DHQ) and introduces the first double bond of the aromatic ring to yield 3-dehydroshikimate. The polypeptide is 3-dehydroquinate dehydratase (Methanococcus maripaludis (strain C6 / ATCC BAA-1332)).